A 183-amino-acid chain; its full sequence is Adenine phosphoribosyltransferase (183 aa).

This sequence belongs to the purine/pyrimidine phosphoribosyltransferase family. As to quaternary structure, homodimer.

The protein resides in the cytoplasm. The enzyme catalyses AMP + diphosphate = 5-phospho-alpha-D-ribose 1-diphosphate + adenine. It functions in the pathway purine metabolism; AMP biosynthesis via salvage pathway; AMP from adenine: step 1/1. In terms of biological role, catalyzes a salvage reaction resulting in the formation of AMP, that is energically less costly than de novo synthesis. The polypeptide is Adenine phosphoribosyltransferase (Photorhabdus laumondii subsp. laumondii (strain DSM 15139 / CIP 105565 / TT01) (Photorhabdus luminescens subsp. laumondii)).